A 622-amino-acid chain; its full sequence is E3 ubiquitin-protein ligase RNF12-A (622 aa).

Disordered stretches follow at residues 1–26 (MESADSTGKGSIEQSESQRQSQMDRL), 67–386 (RLQQ…ESER), and 473–514 (NANA…NSRG). Low complexity predominate over residues 11-21 (SIEQSESQRQS). 2 stretches are compositionally biased toward polar residues: residues 110–138 (SVRQTGNTTRSGQRGNQSWRAVSRTNPNS) and 147–163 (INVNRTSGNPSMPSLDQ). The segment covering 216-242 (RSPDQRRTRARTDRSRSPLHHAVDPPI) has biased composition (basic and acidic residues). Residues 247–256 (HSSSQTVDTS) show a composition bias toward polar residues. The segment covering 272–289 (SSQVQNSSSSNETEGSSR) has biased composition (low complexity). Residues 300 to 317 (VLGTEGQSQSTVHLSNPE) are compositionally biased toward polar residues. Positions 318 to 331 (TRSSSQTPQTDSST) are enriched in low complexity. The span at 332 to 341 (NAETTGTGQR) shows a compositional bias: polar residues. A compositionally biased stretch (basic and acidic residues) spans 355–365 (RPGDYRQRDSI). The span at 366 to 382 (ANRTRSRSQTPNNTVTY) shows a compositional bias: polar residues. The segment at 568–609 (CSVCITEYTEGNKLRKLPCSHEYHIHCIDRWLSENSTCPICR) adopts an RING-type; atypical zinc-finger fold. The short motif at 619–622 (ESIV) is the PDZ-binding element.

It belongs to the RNF12 family. As to quaternary structure, forms homodimers through the C-terminal region. The N-terminus interacts with the homeobox of LIM/homeobox factor lhx1/lim1, with lhx3/lim3 and lhx5/lim5, and with the N-terminus of ldb1. As to expression, shows overlapping expression with lhx1/lim1 and ldb1 in the gastrula mesoderm, and expression overlaps with ldb1 throughout early embryogenesis. After gastrulation, expression is gradually restricted to tissues originated from the ectoderm, the neuroectoderm, neural crest and epidermis, and subsequently to the neural tube as well as the head and tailbud region.

The protein resides in the nucleus. The catalysed reaction is S-ubiquitinyl-[E2 ubiquitin-conjugating enzyme]-L-cysteine + [acceptor protein]-L-lysine = [E2 ubiquitin-conjugating enzyme]-L-cysteine + N(6)-ubiquitinyl-[acceptor protein]-L-lysine.. It functions in the pathway protein modification; protein ubiquitination. Acts as an E3 ubiquitin-protein ligase specific for ldb1, mediating ubiquitination and proteasome-dependent degradation of excess ldb1 in a RING-dependent manner. Does not degrade ldb1 bound to lhx1/lim1, nor lim1 itself and thus contributes to the establishment of proper ldb1-lhx1/lim1 stoichiometry and the formation of a ldb1-lhx1/lim1 complex. Interferes with Spemann organizer function and suppresses secondary axis formation induced by ldb1 and lhx1/lim1. In Xenopus laevis (African clawed frog), this protein is E3 ubiquitin-protein ligase RNF12-A (rnf12-a).